Consider the following 371-residue polypeptide: Bifunctional enzyme IspD/IspF (371 aa).

Positions 1–210 (MSEISLIMLA…LDLPTPSFEI (210 aa)) are 2-C-methyl-D-erythritol 4-phosphate cytidylyltransferase. Residues 211–371 (FTGNGFDVHE…NLKYFDWTRL (161 aa)) are 2-C-methyl-D-erythritol 2,4-cyclodiphosphate synthase. A divalent metal cation is bound by residues D217 and H219. Residues 217 to 219 (DVH) and 243 to 244 (HS) each bind 4-CDP-2-C-methyl-D-erythritol 2-phosphate. Residue H251 coordinates a divalent metal cation. 4-CDP-2-C-methyl-D-erythritol 2-phosphate is bound by residues 265 to 267 (DIG), 270 to 274 (YPDTD), 341 to 344 (TTTE), F348, and R351.

The protein in the N-terminal section; belongs to the IspD/TarI cytidylyltransferase family. IspD subfamily. In the C-terminal section; belongs to the IspF family. A divalent metal cation is required as a cofactor.

It catalyses the reaction 2-C-methyl-D-erythritol 4-phosphate + CTP + H(+) = 4-CDP-2-C-methyl-D-erythritol + diphosphate. The catalysed reaction is 4-CDP-2-C-methyl-D-erythritol 2-phosphate = 2-C-methyl-D-erythritol 2,4-cyclic diphosphate + CMP. It participates in isoprenoid biosynthesis; isopentenyl diphosphate biosynthesis via DXP pathway; isopentenyl diphosphate from 1-deoxy-D-xylulose 5-phosphate: step 2/6. It functions in the pathway isoprenoid biosynthesis; isopentenyl diphosphate biosynthesis via DXP pathway; isopentenyl diphosphate from 1-deoxy-D-xylulose 5-phosphate: step 4/6. In terms of biological role, bifunctional enzyme that catalyzes the formation of 4-diphosphocytidyl-2-C-methyl-D-erythritol from CTP and 2-C-methyl-D-erythritol 4-phosphate (MEP) (IspD), and catalyzes the conversion of 4-diphosphocytidyl-2-C-methyl-D-erythritol 2-phosphate (CDP-ME2P) to 2-C-methyl-D-erythritol 2,4-cyclodiphosphate (ME-CPP) with a corresponding release of cytidine 5-monophosphate (CMP) (IspF). The polypeptide is Bifunctional enzyme IspD/IspF (Campylobacter jejuni subsp. jejuni serotype O:23/36 (strain 81-176)).